The chain runs to 271 residues: Vacuolar arginine/histidine antiporter stm1 (271 aa).

A PQ-loop 1 domain is found at 14–80 (LTELSSFLGA…GNVSSTVLVL (67 aa)). A run of 3 helical transmembrane segments spans residues 17–37 (LSSF…IPQL), 49–69 (ISDL…LGSI), and 77–97 (VLVL…QIYY). At Ser-119 the chain carries Phosphoserine. Helical transmembrane passes span 144-164 (FGVM…IISS), 178-198 (PFTA…PQII), 211-231 (IIFF…ILVF), and 245-265 (PWIL…YQFI). The PQ-loop 2 domain maps to 185–239 (SSVLYFCARIPQIIKNHKAKSTEGLSIIFFVLASVGNTSYAFSILVFPASDYLNY).

It belongs to the laat-1 family.

It localises to the vacuole membrane. It catalyses the reaction L-histidine(out) + L-arginine(in) = L-histidine(in) + L-arginine(out). Amino acid transporter that moves basic amino acids across the vacuolar membrane. Appears to function as an arginine/histidine antiporter. This is Vacuolar arginine/histidine antiporter stm1 (stm1) from Schizosaccharomyces pombe (strain 972 / ATCC 24843) (Fission yeast).